The chain runs to 246 residues: Probable 2-phosphosulfolactate phosphatase (246 aa).

Belongs to the ComB family. Mg(2+) is required as a cofactor.

It catalyses the reaction (2R)-O-phospho-3-sulfolactate + H2O = (2R)-3-sulfolactate + phosphate. This is Probable 2-phosphosulfolactate phosphatase from Nostoc punctiforme (strain ATCC 29133 / PCC 73102).